A 316-amino-acid chain; its full sequence is Cytochrome c biogenesis protein CcsA (316 aa).

8 helical membrane passes run 12 to 32 (HISL…LLVY), 44 to 64 (GMVA…IYSG), 71 to 91 (LYES…IPYF), 98 to 118 (LNVL…SGVL), 145 to 165 (LSYA…VILF), 222 to 242 (VISL…VWAN), 256 to 270 (TWAF…IYLH), and 283 to 303 (AIVA…VNLL).

This sequence belongs to the CcmF/CycK/Ccl1/NrfE/CcsA family. May interact with Ccs1.

The protein resides in the plastid. It localises to the chloroplast thylakoid membrane. In terms of biological role, required during biogenesis of c-type cytochromes (cytochrome c6 and cytochrome f) at the step of heme attachment. This is Cytochrome c biogenesis protein CcsA from Ranunculus macranthus (Large buttercup).